Here is a 470-residue protein sequence, read N- to C-terminus: MYGQQNNYGAPPPQQWGQAPPQGYQPGYQNGPPAVNYGAHPSQQQQWGAPPGPPQHQPYGAPPVNQYGAPPQHQQGYGGHSPQPPFGAPSPAPAGYGAPPTAPQGQYGAPSPYPQQPPQQGFGGPQQGYGSQPQGQSPMMYLGVPIPAPPPAVPVSTLAGYDARFDAERIRKATKGFGTDERTIIDTLSPLDAFQMDVLSRTYEQTVGRSLKSTLEKELSSWLEYTLVLLSLGPLGGDVYLLHRACNGMGTHEDLLNEVLLGRTNQEIFLLKEAYRRTYNQDLVQIVQGELSMKTERMFNMALSGQRDESPYLNHQLVQQDVETLYRAGPGKIGTDEIAICGILISRSKEHLKAIAQAFPARHRVSLSQMIHSEFSGHMRDALFFIARGVEADGDGVVRDCELLHAAMAGMGTKDERMIYRLVRNHWNRPRFNAIKNQYQVLYRNSLRRAVEGETTGKYEKALVGIIEQN.

The interval 1 to 143 is disordered; the sequence is MYGQQNNYGA…QGQSPMMYLG (143 aa). Residues 15-34 are compositionally biased toward low complexity; it reads QWGQAPPQGYQPGYQNGPPA. Residues 82-92 are compositionally biased toward pro residues; it reads PQPPFGAPSPA. Composition is skewed to low complexity over residues 93–110 and 128–138; these read PAGY…YGAP and GYGSQPQGQSP. 4 Annexin repeats span residues 161 to 232, 233 to 304, 316 to 388, and 395 to 468; these read YDAR…LLSL, GPLG…MALS, QLVQ…FIAR, and DGVV…GIIE.

This sequence belongs to the annexin family.

Its function is as follows. Does not appear to play a major role in virulence. May play a role in titan cell formation. This chain is Annexin C1, found in Cryptococcus neoformans var. grubii serotype A (strain H99 / ATCC 208821 / CBS 10515 / FGSC 9487) (Filobasidiella neoformans var. grubii).